The sequence spans 312 residues: Olfactory receptor 6B2 (312 aa).

Over 1–25 (MSGENVTKVSTFILVGLPTAPGLQY) the chain is Extracellular. Asn5 is a glycosylation site (N-linked (GlcNAc...) asparagine). The helical transmembrane segment at 26-46 (LLFLLFLLTYLFVLVENLAII) threads the bilayer. Residues 47–54 (LIVWSSTS) are Cytoplasmic-facing. Residues 55–75 (LHRPMYYFLSSMSFLEIWYVS) traverse the membrane as a helical segment. Residues 76–99 (DITPKMLEGFLLQQKRISFVGCMT) lie on the Extracellular side of the membrane. Cysteines 97 and 189 form a disulfide. The chain crosses the membrane as a helical span at residues 100 to 120 (QLYFFSSLVCTECVLLASMAY). At 121-139 (DRYVAICHPLRYHVLVTPG) the chain is on the cytoplasmic side. The helical transmembrane segment at 140 to 160 (LCLQLVGFSFVSGFTISMIKV) threads the bilayer. At 161 to 196 (CFISSVTFCGSNVLNHFFCDISPILKLACTDFSTAE) the chain is on the extracellular side. A helical transmembrane segment spans residues 197–217 (LVDFILAFIILVFPLLATILS). The Cytoplasmic portion of the chain corresponds to 218 to 237 (YWHITLAVLRIPSATGCWRA). Residues 238-258 (FSTCASHLTVVTVFYTALLFM) traverse the membrane as a helical segment. Residues 259-271 (YVRPQAIDSQSSN) lie on the Extracellular side of the membrane. Residues 272 to 292 (KLISAVYTVVTPIINPLIYCL) form a helical membrane-spanning segment. Over 293–312 (RNKEFKDALKKALGLGQTSH) the chain is Cytoplasmic.

It belongs to the G-protein coupled receptor 1 family.

The protein localises to the cell membrane. Functionally, odorant receptor. The chain is Olfactory receptor 6B2 (OR6B2) from Homo sapiens (Human).